A 449-amino-acid polypeptide reads, in one-letter code: Elongation factor 1-alpha (449 aa).

Residues 5–234 (KQHVSIVVIG…DNCDPPKRPV (230 aa)) enclose the tr-type G domain. Residues 14–21 (GHVDSGKS) are G1. 14–21 (GHVDSGKS) serves as a coordination point for GTP. Lys-55 is subject to N6,N6-dimethyllysine. Positions 70–74 (GITID) are G2. Lys-79 bears the N6,N6,N6-trimethyllysine mark. Residues 91-94 (DAPG) form a G3 region. Residues 91 to 95 (DAPGH) and 153 to 156 (NKMD) contribute to the GTP site. A G4 region spans residues 153 to 156 (NKMD). Position 187 is an N6,N6,N6-trimethyllysine (Lys-187). The G5 stretch occupies residues 194–196 (SGW). N6-methyllysine is present on Lys-265. Residues Lys-310 and Lys-400 each carry the N6,N6,N6-trimethyllysine modification.

This sequence belongs to the TRAFAC class translation factor GTPase superfamily. Classic translation factor GTPase family. EF-Tu/EF-1A subfamily.

It is found in the cytoplasm. This protein promotes the GTP-dependent binding of aminoacyl-tRNA to the A-site of ribosomes during protein biosynthesis. This chain is Elongation factor 1-alpha, found in Pyropia yezoensis (Susabi-nori).